A 91-amino-acid chain; its full sequence is DNA-binding protein HU (91 aa).

The protein belongs to the bacterial histone-like protein family. In terms of assembly, homodimer.

Histone-like DNA-binding protein which is capable of wrapping DNA to stabilize it, and thus to prevent its denaturation under extreme environmental conditions. The protein is DNA-binding protein HU (hup) of Streptococcus thermophilus.